The sequence spans 158 residues: NAD(P)H-quinone oxidoreductase subunit J, chloroplastic (158 aa).

The protein belongs to the complex I 30 kDa subunit family. As to quaternary structure, NDH is composed of at least 16 different subunits, 5 of which are encoded in the nucleus.

It is found in the plastid. Its subcellular location is the chloroplast thylakoid membrane. The catalysed reaction is a plastoquinone + NADH + (n+1) H(+)(in) = a plastoquinol + NAD(+) + n H(+)(out). It catalyses the reaction a plastoquinone + NADPH + (n+1) H(+)(in) = a plastoquinol + NADP(+) + n H(+)(out). In terms of biological role, NDH shuttles electrons from NAD(P)H:plastoquinone, via FMN and iron-sulfur (Fe-S) centers, to quinones in the photosynthetic chain and possibly in a chloroplast respiratory chain. The immediate electron acceptor for the enzyme in this species is believed to be plastoquinone. Couples the redox reaction to proton translocation, and thus conserves the redox energy in a proton gradient. In Guizotia abyssinica (Niger), this protein is NAD(P)H-quinone oxidoreductase subunit J, chloroplastic.